A 141-amino-acid polypeptide reads, in one-letter code: Large ribosomal subunit protein uL11 (141 aa).

It belongs to the universal ribosomal protein uL11 family. As to quaternary structure, part of the ribosomal stalk of the 50S ribosomal subunit. Interacts with L10 and the large rRNA to form the base of the stalk. L10 forms an elongated spine to which L12 dimers bind in a sequential fashion forming a multimeric L10(L12)X complex. Post-translationally, one or more lysine residues are methylated.

Forms part of the ribosomal stalk which helps the ribosome interact with GTP-bound translation factors. The chain is Large ribosomal subunit protein uL11 from Campylobacter concisus (strain 13826).